Reading from the N-terminus, the 350-residue chain is Patr class I histocompatibility antigen, alpha chain E (350 aa).

Positions 1-21 (MVDGTLLLLLSEALALTQTWA) are cleaved as a signal peptide. Positions 22–111 (GSHSLKYFHT…LRGYYNQSEA (90 aa)) are alpha-1. Residues 22–305 (GSHSLKYFHT…KPASQPTIPI (284 aa)) are Extracellular-facing. Residue asparagine 107 is glycosylated (N-linked (GlcNAc...) asparagine). Residues 112–203 (GSHTLQWMHG…EKGKETLLHL (92 aa)) are alpha-2. 2 disulfides stabilise this stretch: cysteine 122-cysteine 185 and cysteine 224-cysteine 280. The segment at 204-295 (EPPKTHVTHH…GLPEPLTLRW (92 aa)) is alpha-3. The 89-residue stretch at 206 to 294 (PKTHVTHHPI…EGLPEPLTLR (89 aa)) folds into the Ig-like C1-type domain. Residues 296–305 (KPASQPTIPI) are connecting peptide. The helical transmembrane segment at 306-329 (VGIIAGLVLLGSVVSGAVVAAVMW) threads the bilayer. At 330-350 (RKKSSGGKGRSYSKAEWSDSA) the chain is on the cytoplasmic side.

It belongs to the MHC class I family. In terms of assembly, heterodimer of an alpha chain and a beta chain (beta-2-microglobulin).

The protein resides in the membrane. In terms of biological role, preferably binds to a peptide derived from the signal sequence of most HLA-A, -B, -C and -G molecules. This is Patr class I histocompatibility antigen, alpha chain E (Patr-E) from Pan troglodytes (Chimpanzee).